The chain runs to 2259 residues: Putative Polycomb group protein ASXL3 (2259 aa).

The 74-residue stretch at arginine 10–glutamate 83 folds into the HTH HARE-type domain. A disordered region spans residues valine 181–lysine 230. Over residues lysine 202–histidine 215 the composition is skewed to basic and acidic residues. A compositionally biased stretch (polar residues) spans lysine 218–glutamine 227. Residues proline 253 to glycine 362 form the DEUBAD domain. 10 disordered regions span residues serine 364–alanine 399, cysteine 607–alanine 643, glutamate 703–proline 810, serine 857–isoleucine 1012, serine 1025–alanine 1049, arginine 1126–glutamate 1150, leucine 1433–valine 1462, aspartate 1614–alanine 1643, aspartate 1687–proline 1719, and asparagine 1993–arginine 2075. 3 stretches are compositionally biased toward polar residues: residues cysteine 607–serine 617, glycine 630–alanine 643, and glutamate 703–serine 717. Low complexity predominate over residues leucine 722 to proline 741. Composition is skewed to polar residues over residues lysine 770–proline 781 and glutamine 926–serine 945. 2 stretches are compositionally biased toward basic and acidic residues: residues aspartate 949–serine 985 and proline 995–arginine 1006. Over residues arginine 1034–serine 1043 the composition is skewed to low complexity. The span at asparagine 1437–threonine 1448 shows a compositional bias: polar residues. The span at glutamate 1699–proline 1719 shows a compositional bias: polar residues. The span at proline 2023 to proline 2055 shows a compositional bias: pro residues. The PHD-type; atypical zinc-finger motif lies at glutamate 2221–valine 2258.

It belongs to the Asx family. Core component of the polycomb repressive deubiquitinase (PR-DUB) complex, at least composed of BAP1, one of ASXL1, ASXL2 or (probably) ASXL3, and one of MBD5 or MBD6. Distinct combinations of ASXL and MBD proteins may preferentially bind specific histone modification marks. The PR-DUB core associates with a number of accessory proteins, including FOXK1, FOXK2, KDM1B, HCFC1 and OGT; KDM1B specifically associates with ASXL2 PR-DUB complexes. Interacts (via PHD domain) with MBD5 and MBD6 (via MBD domain); the interaction is probably direct and mediates association of MBD proteins with the PR-DUB core.

The protein localises to the nucleus. In terms of biological role, putative Polycomb group (PcG) protein. PcG proteins act by forming multiprotein complexes, which are required to maintain the transcriptionally repressive state of homeotic genes throughout development. PcG proteins are not required to initiate repression, but to maintain it during later stages of development. They probably act via methylation of histones, rendering chromatin heritably changed in its expressibility. Non-catalytic component of the PR-DUB complex, a complex that specifically mediates deubiquitination of histone H2A monoubiquitinated at 'Lys-119' (H2AK119ub1). The PR-DUB complex is an epigenetic regulator of gene expression and acts as a transcriptional coactivator, affecting genes involved in development, cell communication, signaling, cell proliferation and cell viability. ASXL1, ASXL2 and ASXL3 function redundantly in the PR-DUB complex and are essential for chromatin recruitment and transcriptional activation of associated genes. The sequence is that of Putative Polycomb group protein ASXL3 (Asxl3) from Mus musculus (Mouse).